We begin with the raw amino-acid sequence, 338 residues long: DNA-directed RNA polymerase subunit alpha (338 aa).

Residues 1–230 are alpha N-terminal domain (alpha-NTD); that stretch reads MRKITTSAYM…QQMSVFKGIL (230 aa). Residues 247-338 are alpha C-terminal domain (alpha-CTD); the sequence is FSKLLSSVED…ELKSQMSAKE (92 aa).

This sequence belongs to the RNA polymerase alpha chain family. As to quaternary structure, homodimer. The RNAP catalytic core consists of 2 alpha, 1 beta, 1 beta' and 1 omega subunit. When a sigma factor is associated with the core the holoenzyme is formed, which can initiate transcription.

The enzyme catalyses RNA(n) + a ribonucleoside 5'-triphosphate = RNA(n+1) + diphosphate. Its function is as follows. DNA-dependent RNA polymerase catalyzes the transcription of DNA into RNA using the four ribonucleoside triphosphates as substrates. This Campylobacter concisus (strain 13826) protein is DNA-directed RNA polymerase subunit alpha.